The chain runs to 218 residues: Capsid protein (218 aa).

Methionine 1 bears the N-acetylmethionine; by host mark. Low complexity predominate over residues 1–10 (MDKSESTSAG). Positions 1 to 30 (MDKSESTSAGRNRRRRPRRGSRSASSSSDA) are disordered. The segment covering 11–21 (RNRRRRPRRGS) has biased composition (basic residues).

This sequence belongs to the cucumovirus capsid protein family.

It localises to the virion. Functionally, capsid protein. Probably binds RNA and plays a role in packaging. The sequence is that of Capsid protein from Cucumis sativus (Cucumber).